The primary structure comprises 360 residues: MLMLLTFFAEHMTPLNVFRYITFRTGGAMITSALIVFLFGPSIINSLRVRQGKGQPIRADGPQTHFKKAGTPTMGGLMIMTGILVSCLLWANLASVYVWVVLLVTVGFGAIGFYDDYLKVTKQSDKGFSGKARLGIEFLIAAVAAFVIMRAGQEPFSSSLTFPFAKQFVVNLSWFFIPFAAFVMVGAGNAVNLTDGLDGLAIVPVMVAAASFGFIAYLSGNAIFADYLQIHFVPGTGELAVVLGAVIGAGLGFLWFNAPPAAIFMGDTGSLALGGMLGTVAVATKHEIVLAIIGGLFVVEALSVIIQVGSFKLTGKRVFLMAPIHHHFEKKGWTESQVVIRFWIVAIILAMIGLSTLKLR.

10 consecutive transmembrane segments (helical) span residues 27–47, 71–91, 93–113, 128–148, 168–188, 199–219, 239–259, 262–282, 288–308, and 337–357; these read GAMI…INSL, TPTM…LLWA, LASV…AIGF, FSGK…AFVI, FVVN…VGAG, GLAI…AYLS, LAVV…FNAP, AIFM…TVAV, IVLA…IIQV, and QVVI…LSTL.

Belongs to the glycosyltransferase 4 family. MraY subfamily. Mg(2+) is required as a cofactor.

The protein resides in the cell inner membrane. It catalyses the reaction UDP-N-acetyl-alpha-D-muramoyl-L-alanyl-gamma-D-glutamyl-meso-2,6-diaminopimeloyl-D-alanyl-D-alanine + di-trans,octa-cis-undecaprenyl phosphate = di-trans,octa-cis-undecaprenyl diphospho-N-acetyl-alpha-D-muramoyl-L-alanyl-D-glutamyl-meso-2,6-diaminopimeloyl-D-alanyl-D-alanine + UMP. Its pathway is cell wall biogenesis; peptidoglycan biosynthesis. Catalyzes the initial step of the lipid cycle reactions in the biosynthesis of the cell wall peptidoglycan: transfers peptidoglycan precursor phospho-MurNAc-pentapeptide from UDP-MurNAc-pentapeptide onto the lipid carrier undecaprenyl phosphate, yielding undecaprenyl-pyrophosphoryl-MurNAc-pentapeptide, known as lipid I. This Brucella anthropi (strain ATCC 49188 / DSM 6882 / CCUG 24695 / JCM 21032 / LMG 3331 / NBRC 15819 / NCTC 12168 / Alc 37) (Ochrobactrum anthropi) protein is Phospho-N-acetylmuramoyl-pentapeptide-transferase.